The chain runs to 162 residues: uncharacterized protein (162 aa).

The tract at residues 1–49 (MNSRTASARGWFSSRPPTSESDLEPATDGPASETTTLSPEATTFNDTRI) is disordered. The segment covering 32-46 (SETTTLSPEATTFND) has biased composition (polar residues). The helical transmembrane segment at 62–82 (MLLSFGIITVIGLAVALVLYI) threads the bilayer.

It localises to the membrane. This is an uncharacterized protein from Homo sapiens (Human).